The chain runs to 296 residues: Aquaporin PIP1-6 (296 aa).

A run of 2 helical transmembrane segments spans residues 63-83 and 98-120; these read IAEFVATFLFLYVTVLTVMGV and IAWAFGGMIFALVYCTAGVSGGH. An NPA 1 motif is present at residues 122–124; that stretch reads NPA. The next 3 helical transmembrane spans lie at 141-161, 183-203, and 217-237; these read VYYVVMQCLGAVCGAGVVKAF, GDGLGAEVVGTFVLVYTVFSA, and ALAPLPIGFAVFLVHLATIPI. Positions 243–245 match the NPA 2 motif; it reads NPA. Residues 265-285 form a helical membrane-spanning segment; that stretch reads IFWVGPFAGAALAAVYHQVVL.

This sequence belongs to the MIP/aquaporin (TC 1.A.8) family. PIP (TC 1.A.8.11) subfamily.

It localises to the cell membrane. Aquaporins facilitate the transport of water and small neutral solutes across cell membranes. The chain is Aquaporin PIP1-6 (PIP1-6) from Zea mays (Maize).